A 453-amino-acid polypeptide reads, in one-letter code: Glucose N-acetyltransferase 1-B (453 aa).

The Cytoplasmic portion of the chain corresponds to methionine 1–tyrosine 8. A helical; Signal-anchor for type II membrane protein membrane pass occupies residues leucine 9–phenylalanine 29. Over glutamine 30–asparagine 453 the chain is Lumenal. N-linked (GlcNAc...) asparagine glycosylation is found at asparagine 108, asparagine 126, and asparagine 176. A DXD motif is present at residues aspartate 187 to aspartate 189.

The protein belongs to the GNT1 family.

It localises to the golgi apparatus membrane. The protein resides in the vacuole membrane. Its function is as follows. N-acetylglucosaminyltransferase involved in the Golgi-specific modification of N-linked glycans. The chain is Glucose N-acetyltransferase 1-B (GNT1-B) from Kluyveromyces lactis (strain ATCC 8585 / CBS 2359 / DSM 70799 / NBRC 1267 / NRRL Y-1140 / WM37) (Yeast).